An 88-amino-acid polypeptide reads, in one-letter code: Small ribosomal subunit protein bS20 (88 aa).

The segment at Met1 to His20 is disordered.

It belongs to the bacterial ribosomal protein bS20 family.

Functionally, binds directly to 16S ribosomal RNA. This Ralstonia pickettii (strain 12J) protein is Small ribosomal subunit protein bS20.